The sequence spans 533 residues: MHWADVIAEDVLNKSGKHLVATGITPSGHIHIGNMREVVTADAAYRALLDMGADARLIYIADNYDPLRKVYPFLPESYAEHVGKPISEVPCPCGDCANYAEHFLKPFIEALRRLGINPEVLRADEMYRAGLYTEAIKTALAKRDEIAKILEEVSGKTVAEDWSPFNPRCNECGKITTTKVAGFDLEAETVDYVCACGHSGTVPMAGGGKLTWRVDWPARWAVLGVTVEPFGKDHASKGGSYDTGKRIVREIYGHEPPFPIVYEWIMLGKRGAMSSSTGVVVSISDMLEVVPPEVLRYLIIRTKPEKHIQFDPGQPLLNLVDEYERLRDKFRENDPSLGDFEKRIYELSRATGICHPEIPFKQMVTIYQVARGDFEQVLKIVKRSGFSTENEKCIRELADNVSRWLELYAPPFAKFSVKEKVPVQTATLSELQKAFLGAFADLIETKGKISGEEYHMLVYSAKDEGSELNRLIAQKVNVPVPQVDPKDLFKAIYTSILGQSSGPKAGWFLSSFEKGFLITRFREASTYNPEKSS.

Positions P26 to N34 match the 'HIGH' region motif. Residues A272–S276 carry the 'KMSKS' region motif.

It belongs to the class-I aminoacyl-tRNA synthetase family.

Its subcellular location is the cytoplasm. The enzyme catalyses tRNA(Lys) + L-lysine + ATP = L-lysyl-tRNA(Lys) + AMP + diphosphate. This chain is Lysine--tRNA ligase 1, found in Methanosarcina acetivorans (strain ATCC 35395 / DSM 2834 / JCM 12185 / C2A).